The following is a 344-amino-acid chain: Phenylalanine--tRNA ligase alpha subunit (344 aa).

Glutamate 255 serves as a coordination point for Mg(2+).

This sequence belongs to the class-II aminoacyl-tRNA synthetase family. Phe-tRNA synthetase alpha subunit type 1 subfamily. In terms of assembly, tetramer of two alpha and two beta subunits. It depends on Mg(2+) as a cofactor.

It localises to the cytoplasm. The catalysed reaction is tRNA(Phe) + L-phenylalanine + ATP = L-phenylalanyl-tRNA(Phe) + AMP + diphosphate + H(+). The protein is Phenylalanine--tRNA ligase alpha subunit of Sulfurihydrogenibium sp. (strain YO3AOP1).